The primary structure comprises 244 residues: Dihydropteridine reductase (244 aa).

N-acetylalanine is present on Ala-2. 14-38 (LVYGGRGALGSRCVQAFRARNWWVA) serves as a coordination point for NADP(+). 4 positions are modified to N6-succinyllysine: Lys-73, Lys-79, Lys-96, and Lys-102. Catalysis depends on Tyr-150, which acts as the Proton acceptor.

This sequence belongs to the short-chain dehydrogenases/reductases (SDR) family. As to quaternary structure, homodimer.

The catalysed reaction is 5,6,7,8-tetrahydropteridine + NAD(+) = 6,7-dihydropteridine + NADH + H(+). The enzyme catalyses 5,6,7,8-tetrahydropteridine + NADP(+) = 6,7-dihydropteridine + NADPH + H(+). In terms of biological role, catalyzes the conversion of quinonoid dihydrobiopterin into tetrahydrobiopterin. The polypeptide is Dihydropteridine reductase (QDPR) (Homo sapiens (Human)).